Consider the following 154-residue polypeptide: Large ribosomal subunit protein uL13 (154 aa).

Belongs to the universal ribosomal protein uL13 family. Part of the 50S ribosomal subunit.

Functionally, this protein is one of the early assembly proteins of the 50S ribosomal subunit, although it is not seen to bind rRNA by itself. It is important during the early stages of 50S assembly. This Cereibacter sphaeroides (strain ATCC 17025 / ATH 2.4.3) (Rhodobacter sphaeroides) protein is Large ribosomal subunit protein uL13.